An 82-amino-acid polypeptide reads, in one-letter code: MENILGLVALACGLIVGLGAIGASIGIALMGGKFLESSARQPELINELQTKMFILAGLIDAAFLIGVAIALLFAFANPFVLA.

2 consecutive transmembrane segments (helical) span residues 7–27 (LVAL…SIGI) and 53–73 (FILA…ALLF).

The protein belongs to the ATPase C chain family. F-type ATPases have 2 components, F(1) - the catalytic core - and F(0) - the membrane proton channel. F(1) has five subunits: alpha(3), beta(3), gamma(1), delta(1), epsilon(1). F(0) has three main subunits: a(1), b(2) and c(10-14). The alpha and beta chains form an alternating ring which encloses part of the gamma chain. F(1) is attached to F(0) by a central stalk formed by the gamma and epsilon chains, while a peripheral stalk is formed by the delta and b chains.

The protein resides in the cell inner membrane. In terms of biological role, f(1)F(0) ATP synthase produces ATP from ADP in the presence of a proton or sodium gradient. F-type ATPases consist of two structural domains, F(1) containing the extramembraneous catalytic core and F(0) containing the membrane proton channel, linked together by a central stalk and a peripheral stalk. During catalysis, ATP synthesis in the catalytic domain of F(1) is coupled via a rotary mechanism of the central stalk subunits to proton translocation. Key component of the F(0) channel; it plays a direct role in translocation across the membrane. A homomeric c-ring of between 10-14 subunits forms the central stalk rotor element with the F(1) delta and epsilon subunits. The polypeptide is ATP synthase subunit c (Acidovorax ebreus (strain TPSY) (Diaphorobacter sp. (strain TPSY))).